Reading from the N-terminus, the 285-residue chain is Putative sugar uptake protein lin0444 (285 aa).

Helical transmembrane passes span 2 to 21, 31 to 50, 55 to 77, 111 to 133, 146 to 168, 172 to 194, 207 to 229, 233 to 255, and 262 to 284; these read SIYLIALLPVLGWGFMPIIA, QLLGTSISALLFAFILFWIL, TVLSFIVSFVSGIFWSFGQLLQF, WQTVTAVIIGVVAVILILIGVVM, SVSFHVYGIVILSSFFLTLYVVT, FDVTGFSIILPQAIGMLTCAIGI, VTFNLMTGLSWSIANLGMFLATA, VATSFSISQACVIVATIGGILIF, and LEWTFILSGILLIMVGVVFLSLL.

It belongs to the GRP transporter (TC 2.A.7.5) family.

The protein resides in the cell membrane. This is Putative sugar uptake protein lin0444 from Listeria innocua serovar 6a (strain ATCC BAA-680 / CLIP 11262).